A 959-amino-acid chain; its full sequence is Probable serine/threonine-protein kinase DDB_G0291664 (959 aa).

Positions 154-213 (QQQQQQQLTPPPSPPLLPIPQPPAQNEEQQLTQPPSIPPPQQKQIKIQKSDRGTQVKSIT) are disordered. The segment covering 162-176 (TPPPSPPLLPIPQPP) has biased composition (pro residues). ANK repeat units follow at residues 294 to 324 (KGET…CMGI) and 333 to 362 (LNKN…PLKM). Residues 482–762 (IDFHTQIGSA…EVGIIETEFL (281 aa)) form the Protein kinase domain. ATP-binding positions include 488 to 496 (IGSAGNASV) and Lys-509. Asp-610 (proton acceptor) is an active-site residue. The disordered stretch occupies residues 904-959 (NNINNNNNNNNNCNNSKKFKTTSESTSALGSDASSSSSPSSSSPSPKYSASIYHHQ).

It belongs to the protein kinase superfamily. Ser/Thr protein kinase family.

It carries out the reaction L-seryl-[protein] + ATP = O-phospho-L-seryl-[protein] + ADP + H(+). The catalysed reaction is L-threonyl-[protein] + ATP = O-phospho-L-threonyl-[protein] + ADP + H(+). This is Probable serine/threonine-protein kinase DDB_G0291664 from Dictyostelium discoideum (Social amoeba).